Here is a 221-residue protein sequence, read N- to C-terminus: uncharacterized protein (221 aa).

The segment at residues 77–96 (YRERAVELGVPERAILVEPN) is a DNA-binding region (H-T-H motif).

It to E.coli YdcF.

In terms of biological role, the imp locus inhibits the extrachromosomal maintenance of the streptomyces plasmid SLP1. May function as a transcriptional activator. This is an uncharacterized protein from Streptomyces coelicolor (strain ATCC BAA-471 / A3(2) / M145).